We begin with the raw amino-acid sequence, 210 residues long: Chaperone protein TorD (210 aa).

Belongs to the TorD/DmsD family. TorD subfamily.

It is found in the cytoplasm. Involved in the biogenesis of TorA. Acts on TorA before the insertion of the molybdenum cofactor and, as a result, probably favors a conformation of the apoenzyme that is competent for acquiring the cofactor. In Salmonella arizonae (strain ATCC BAA-731 / CDC346-86 / RSK2980), this protein is Chaperone protein TorD.